Consider the following 344-residue polypeptide: MVRIKDIALKAKVSSATVSRILNEDESLSVAGETRQRVINIAEELGYQTVAKRRKSRGQKQRAQPLIGVLSCLSPDQERQDPYFSSIRKGIEKECFEQEIFITNSIHLGSFQEHIFRELDGVIVIGRVHDEAVKHISGRLEHAVFINHSPDPQAYDSIGIDFESASRQAIDHLFDLGYKRLGYIGGQEKEHTLKDGQSIRRTIEDKRLTAFLESAAPQPEHVLIGEYSMREGYRLMKKAIDQGHLPEAFFIASDSMAIGALKALQEAGLQVPRDTAIVSFNGIEEAEFASTPLTTVKVYTEEMGRTGVKLLLDRLNGRTLPQHVTLPTTLIVRQSCGCTAKEVT.

An HTH lacI-type domain is found at 2-58 (VRIKDIALKAKVSSATVSRILNEDESLSVAGETRQRVINIAEELGYQTVAKRRKSRG). Positions 4-23 (IKDIALKAKVSSATVSRILN) form a DNA-binding region, H-T-H motif.

Its subcellular location is the cytoplasm. Represses the melibiose operon melREDCA in the absence of melibiose or raffinose. Binds to two binding sites at the promoter region of the operon. In Bacillus subtilis (strain 168), this protein is HTH-type transcriptional repressor MelR.